Here is a 185-residue protein sequence, read N- to C-terminus: MIDETLFDAEEKMEKAVAVARDDLASIRTGRANPGMFNRIHVDYYGAVTPITQLSSINVPEARMVVIKPYEASQLRPIEDAIRNSDLGVNPTNDGNVIRVSIPQLTEERRRDLVKQAKGKGEDAKVSVRNIRRKAMEELTRIKKDGDAGEDDVARAEKDLDKTTQQYTHQIDELVKHKEGELLEV.

The protein belongs to the RRF family.

Its subcellular location is the cytoplasm. Responsible for the release of ribosomes from messenger RNA at the termination of protein biosynthesis. May increase the efficiency of translation by recycling ribosomes from one round of translation to another. The protein is Ribosome-recycling factor of Mycolicibacterium vanbaalenii (strain DSM 7251 / JCM 13017 / BCRC 16820 / KCTC 9966 / NRRL B-24157 / PYR-1) (Mycobacterium vanbaalenii).